The primary structure comprises 257 residues: Putative B3 domain-containing protein At2g27410 (257 aa).

A disordered region spans residues 5-50 (ARTTKINHFRGTSTTQNPNRGLEPSPSSYVTRRSKEKRPINVEKRS). A compositionally biased stretch (polar residues) spans 8 to 35 (TKINHFRGTSTTQNPNRGLEPSPSSYVT). Residues 115–209 (TPDFLTEDET…KLCFALTPKN (95 aa)) constitute a DNA-binding region (TF-B3). Residues 212-257 (RGNSLPGGDGASTSGESGQVPLPIPPARYSSNSGQGCSGESSSSSS) are disordered. Residues 241–257 (SSNSGQGCSGESSSSSS) show a composition bias toward low complexity.

It is found in the nucleus. The protein is Putative B3 domain-containing protein At2g27410 of Arabidopsis thaliana (Mouse-ear cress).